The sequence spans 767 residues: Photosystem I P700 chlorophyll a apoprotein A1 (767 aa).

The interval 1–22 (MTISPPESGEKDKKILESPVKA) is disordered. Basic and acidic residues predominate over residues 8 to 22 (SGEKDKKILESPVKA). A run of 8 helical transmembrane segments spans residues 76–99 (IFSA…FHGA), 162–185 (LMAL…FHYH), 201–225 (LNHH…HIGA), 309–327 (VSHH…GHMY), 368–391 (RHAQ…HHMY), 407–433 (LGLF…IAMV), 455–477 (ALIS…LYIH), and 558–576 (LMIH…LILL). [4Fe-4S] cluster contacts are provided by Cys600 and Cys609. Transmembrane regions (helical) follow at residues 616-637 (HVFL…HFSW) and 681-703 (ISMY…MFLF). Residue His692 participates in divinylchlorophyll a' binding. Divinyl chlorophyll a-binding residues include Met700 and Tyr708. Phylloquinone is bound at residue Trp709. A helical transmembrane segment spans residues 741-761 (AVGVTHFLVGGIATTWAFFHA).

It belongs to the PsaA/PsaB family. In terms of assembly, the PsaA/B heterodimer binds the P700 divinyl chlorophyll special pair and subsequent electron acceptors. PSI consists of a core antenna complex that captures photons, and an electron transfer chain that converts photonic excitation into a charge separation. The cyanobacterial PSI reaction center is composed of one copy each of PsaA,B,C,D,E,F,I,J,K,L,M and X, and forms trimeric complexes. PSI electron transfer chain: 5 divinyl chlorophyll a, 1 divinyl chlorophyll a', 2 phylloquinones and 3 4Fe-4S clusters. PSI core antenna: 90 divinyl chlorophyll a, 22 carotenoids, 3 phospholipids and 1 galactolipid. P700 is a divinyl chlorophyll a/divinyl chlorophyll a' dimer, A0 is one or more divinyl chlorophyll a, A1 is one or both phylloquinones and FX is a shared 4Fe-4S iron-sulfur center. is required as a cofactor.

It localises to the cellular thylakoid membrane. The catalysed reaction is reduced [plastocyanin] + hnu + oxidized [2Fe-2S]-[ferredoxin] = oxidized [plastocyanin] + reduced [2Fe-2S]-[ferredoxin]. Functionally, psaA and PsaB bind P700, the primary electron donor of photosystem I (PSI), as well as the electron acceptors A0, A1 and FX. PSI is a plastocyanin/cytochrome c6-ferredoxin oxidoreductase, converting photonic excitation into a charge separation, which transfers an electron from the donor P700 chlorophyll pair to the spectroscopically characterized acceptors A0, A1, FX, FA and FB in turn. Oxidized P700 is reduced on the lumenal side of the thylakoid membrane by plastocyanin or cytochrome c6. The sequence is that of Photosystem I P700 chlorophyll a apoprotein A1 from Prochlorococcus marinus subsp. pastoris (strain CCMP1986 / NIES-2087 / MED4).